A 176-amino-acid chain; its full sequence is Crossover junction endodeoxyribonuclease RuvC (176 aa).

Residues Asp-12, Glu-72, and Asp-144 contribute to the active site. Mg(2+)-binding residues include Asp-12, Glu-72, and Asp-144.

This sequence belongs to the RuvC family. Homodimer which binds Holliday junction (HJ) DNA. The HJ becomes 2-fold symmetrical on binding to RuvC with unstacked arms; it has a different conformation from HJ DNA in complex with RuvA. In the full resolvosome a probable DNA-RuvA(4)-RuvB(12)-RuvC(2) complex forms which resolves the HJ. It depends on Mg(2+) as a cofactor.

The protein localises to the cytoplasm. The catalysed reaction is Endonucleolytic cleavage at a junction such as a reciprocal single-stranded crossover between two homologous DNA duplexes (Holliday junction).. The RuvA-RuvB-RuvC complex processes Holliday junction (HJ) DNA during genetic recombination and DNA repair. Endonuclease that resolves HJ intermediates. Cleaves cruciform DNA by making single-stranded nicks across the HJ at symmetrical positions within the homologous arms, yielding a 5'-phosphate and a 3'-hydroxyl group; requires a central core of homology in the junction. The consensus cleavage sequence is 5'-(A/T)TT(C/G)-3'. Cleavage occurs on the 3'-side of the TT dinucleotide at the point of strand exchange. HJ branch migration catalyzed by RuvA-RuvB allows RuvC to scan DNA until it finds its consensus sequence, where it cleaves and resolves the cruciform DNA. In Methylocella silvestris (strain DSM 15510 / CIP 108128 / LMG 27833 / NCIMB 13906 / BL2), this protein is Crossover junction endodeoxyribonuclease RuvC.